The chain runs to 215 residues: uncharacterized protein (215 aa).

Residues S114, D162, and H194 each act as charge relay system in the active site.

The protein belongs to the AB hydrolase superfamily. AB hydrolase 2 family.

This is an uncharacterized protein from Rickettsia prowazekii (strain Madrid E).